The chain runs to 180 residues: Pro-glucagon (180 aa).

A signal peptide spans 1 to 20 (MKSVYFVAGLFIMLAQGSWQ). Residues 23–58 (LQDTEEKPRSVSASQTDMLDDPDQMNEDKRHSQGTF) form a disordered region. Residue Ser-54 is modified to Phosphoserine. Residues 84-89 (NRNNIA) constitute a propeptide that is removed on maturation. Residues Ser-105 and Ser-108 each carry the phosphoserine modification. Residue Arg-127 is modified to Arginine amide. Positions 131–145 (DFPEEVAIVEELGRR) are excised as a propeptide. Phosphoserine is present on residues Ser-150 and Ser-152.

Belongs to the glucagon family. Proglucagon is post-translationally processed in a tissue-specific manner in pancreatic A cells and intestinal L cells. In pancreatic A cells, the major bioactive hormone is glucagon cleaved by PCSK2/PC2. In the intestinal L cells PCSK1/PC1 liberates GLP-1, GLP-2, glicentin and oxyntomodulin. GLP-1 is further N-terminally truncated by post-translational processing in the intestinal L cells resulting in GLP-1(7-37) GLP-1-(7-36)amide. The C-terminal amidation is neither important for the metabolism of GLP-1 nor for its effects on the endocrine pancreas.

Its subcellular location is the secreted. In terms of biological role, plays a key role in glucose metabolism and homeostasis. Regulates blood glucose by increasing gluconeogenesis and decreasing glycolysis. A counterregulatory hormone of insulin, raises plasma glucose levels in response to insulin-induced hypoglycemia. Plays an important role in initiating and maintaining hyperglycemic conditions in diabetes. Functionally, potent stimulator of glucose-dependent insulin release. Also stimulates insulin release in response to IL6. Plays important roles on gastric motility and the suppression of plasma glucagon levels. May be involved in the suppression of satiety and stimulation of glucose disposal in peripheral tissues, independent of the actions of insulin. Has growth-promoting activities on intestinal epithelium. May also regulate the hypothalamic pituitary axis (HPA) via effects on LH, TSH, CRH, oxytocin, and vasopressin secretion. Increases islet mass through stimulation of islet neogenesis and pancreatic beta cell proliferation. Inhibits beta cell apoptosis. Stimulates intestinal growth and up-regulates villus height in the small intestine, concomitant with increased crypt cell proliferation and decreased enterocyte apoptosis. The gastrointestinal tract, from the stomach to the colon is the principal target for GLP-2 action. Plays a key role in nutrient homeostasis, enhancing nutrient assimilation through enhanced gastrointestinal function, as well as increasing nutrient disposal. Stimulates intestinal glucose transport and decreases mucosal permeability. Its function is as follows. Significantly reduces food intake. Inhibits gastric emptying in humans. Suppression of gastric emptying may lead to increased gastric distension, which may contribute to satiety by causing a sensation of fullness. In terms of biological role, may modulate gastric acid secretion and the gastro-pyloro-duodenal activity. May play an important role in intestinal mucosal growth in the early period of life. The sequence is that of Pro-glucagon (GCG) from Cavia porcellus (Guinea pig).